The chain runs to 91 residues: Small ribosomal subunit protein uS19 (91 aa).

This sequence belongs to the universal ribosomal protein uS19 family.

Protein S19 forms a complex with S13 that binds strongly to the 16S ribosomal RNA. This chain is Small ribosomal subunit protein uS19, found in Azoarcus sp. (strain BH72).